A 201-amino-acid polypeptide reads, in one-letter code: Small ribosomal subunit protein uS4 (201 aa).

The S4 RNA-binding domain occupies 91 to 155 (SRLDNVVYRA…STLPFQVARE (65 aa)).

This sequence belongs to the universal ribosomal protein uS4 family. Part of the 30S ribosomal subunit. Contacts protein S5. The interaction surface between S4 and S5 is involved in control of translational fidelity.

Functionally, one of the primary rRNA binding proteins, it binds directly to 16S rRNA where it nucleates assembly of the body of the 30S subunit. With S5 and S12 plays an important role in translational accuracy. The sequence is that of Small ribosomal subunit protein uS4 from Rhodococcus jostii (strain RHA1).